Here is a 139-residue protein sequence, read N- to C-terminus: Probable disulfide formation protein C 1 (139 aa).

Residues 8 to 27 form a helical membrane-spanning segment; the sequence is EYALFTAWGASFIATLGSLY. A disulfide bond links Cys37 and Cys40. 2 helical membrane-spanning segments follow: residues 42–61 and 68–85; these read YQRI…VVKK and YSLP…YHYV. Cys99 and Cys104 form a disulfide bridge. A helical transmembrane segment spans residues 113 to 135; it reads GFVTIPFLALIGFITIAVCSFIV.

The protein belongs to the DsbB family. BdbC subfamily.

The protein localises to the cell membrane. In terms of biological role, required for disulfide bond formation in some proteins. The polypeptide is Probable disulfide formation protein C 1 (bdbC1) (Bacillus anthracis).